The sequence spans 257 residues: Achaete-scute complex protein T3 (257 aa).

A bHLH domain is found at 83-145; it reads PSVARRNARE…RIAVEYIRGL (63 aa). The tract at residues 161–221 is disordered; that stretch reads YNSADESSND…SEISGGGYIK (61 aa). Low complexity-rich tracts occupy residues 165-184 and 193-213; these read DESSNDGSSYNDYNDSLDSS and QSAQSHSYHSASPTPSYSGSE.

As to quaternary structure, efficient DNA binding requires dimerization with another bHLH protein. As to expression, l(1)SC, SC and AC strongly label the presumptive stomatogastric nervous system, while ASE is more prominent in the presumptive procephalic lobe.

AS-C proteins are involved in the determination of the neuronal precursors in the peripheral nervous system and the central nervous system. This Drosophila melanogaster (Fruit fly) protein is Achaete-scute complex protein T3 (l(1)sc).